A 296-amino-acid polypeptide reads, in one-letter code: Cytidine deaminase (296 aa).

2 CMP/dCMP-type deaminase domains span residues 47–167 (EESE…FGPS) and 186–296 (DSSD…IDPA). 88 to 90 (NLE) is a binding site for substrate. Position 101 (H101) interacts with Zn(2+). Residue E103 is the Proton donor of the active site. Zn(2+) is bound by residues C128 and C131.

Belongs to the cytidine and deoxycytidylate deaminase family. In terms of assembly, homodimer. The cofactor is Zn(2+).

It carries out the reaction cytidine + H2O + H(+) = uridine + NH4(+). The catalysed reaction is 2'-deoxycytidine + H2O + H(+) = 2'-deoxyuridine + NH4(+). Its function is as follows. This enzyme scavenges exogenous and endogenous cytidine and 2'-deoxycytidine for UMP synthesis. The polypeptide is Cytidine deaminase (Shewanella woodyi (strain ATCC 51908 / MS32)).